A 319-amino-acid chain; its full sequence is Acetyl esterase (319 aa).

An Involved in the stabilization of the negatively charged intermediate by the formation of the oxyanion hole motif is present at residues His91–Gly93. Residues Ser165, Asp262, and His292 contribute to the active site.

Belongs to the 'GDXG' lipolytic enzyme family. In terms of assembly, homodimer. Interacts with MalT and MelA.

The protein localises to the cytoplasm. Its function is as follows. Displays esterase activity towards short chain fatty esters (acyl chain length of up to 8 carbons). Able to hydrolyze triacetylglycerol (triacetin) and tributyrylglycerol (tributyrin), but not trioleylglycerol (triolein) or cholesterol oleate. Negatively regulates MalT activity by antagonizing maltotriose binding. Inhibits MelA galactosidase activity. This Shigella boydii serotype 18 (strain CDC 3083-94 / BS512) protein is Acetyl esterase.